The sequence spans 312 residues: Protoheme IX farnesyltransferase (312 aa).

8 helical membrane-spanning segments follow: residues leucine 34–leucine 54, isoleucine 56–leucine 76, isoleucine 119–isoleucine 139, isoleucine 152–glycine 172, leucine 179–phenylalanine 199, isoleucine 225–phenylalanine 245, valine 248–phenylalanine 268, and leucine 283–valine 303.

It belongs to the UbiA prenyltransferase family. Protoheme IX farnesyltransferase subfamily.

Its subcellular location is the cell inner membrane. The enzyme catalyses heme b + (2E,6E)-farnesyl diphosphate + H2O = Fe(II)-heme o + diphosphate. Its pathway is porphyrin-containing compound metabolism; heme O biosynthesis; heme O from protoheme: step 1/1. Functionally, converts heme B (protoheme IX) to heme O by substitution of the vinyl group on carbon 2 of heme B porphyrin ring with a hydroxyethyl farnesyl side group. The sequence is that of Protoheme IX farnesyltransferase from Bradyrhizobium sp. (strain BTAi1 / ATCC BAA-1182).